Here is a 238-residue protein sequence, read N- to C-terminus: UPF0280 protein Mboo_1274 (238 aa).

It belongs to the UPF0280 family.

The protein is UPF0280 protein Mboo_1274 of Methanoregula boonei (strain DSM 21154 / JCM 14090 / 6A8).